We begin with the raw amino-acid sequence, 42 residues long: Photosystem I reaction center subunit IX (42 aa).

The helical transmembrane segment at 7 to 27 threads the bilayer; it reads YLSTAPVLAAIWFAILAGLLI.

This sequence belongs to the PsaJ family.

It is found in the plastid. Its subcellular location is the chloroplast thylakoid membrane. In terms of biological role, may help in the organization of the PsaE and PsaF subunits. In Zygnema circumcarinatum (Green alga), this protein is Photosystem I reaction center subunit IX.